The sequence spans 240 residues: Protein unc-119 homolog A (240 aa).

Gly residues predominate over residues M1 to S12. Residues M1 to P62 are disordered. A phosphoserine; by CK2 mark is found at S37, S39, and S41. A tetradecanoate-binding site is contributed by Y131.

This sequence belongs to the PDE6D/unc-119 family. As to quaternary structure, may interact with GTP-bound ARL1. Interacts with ARL2 and ARL3 (GTP-bound forms); this promotes the release of myristoylated cargo proteins. Found in a complex with ARL3, RP2 and UNC119; RP2 induces hydrolysis of GTP ARL3 in the complex, leading to the release of UNC119. Interacts with NPHP3 (when myristoylated). Interacts with CYS1 (when myristoylated). Interacts with MACIR; interaction only takes place when UNC119 is not liganded with myristoylated proteins. Interacts with CABP4; in the absence of calcium. Interacts with DNM1; leading to a decrease of DNM1 GTPase activity. Interacts with LCK; this interaction plays a crucial role in activation of LCK. Interacts with FYN. Interacts with RAB11A; in a cell cycle-dependent manner. Interacts with LYN (via SH2 and SH3 domains); leading to LYN activation. Found in a complex with ABL1, ABL2, CRK and UNC119; leading to the inhibition of CRK phosphorylation by ABL kinases. Interacts with CD44. Interacts with KLHL18 (via kelch repeats). Interacts with PPP3CA, PPP3CB and PPP3CC. Interacts with USP48; this interaction promotes UNC119 stability. Phosphorylation suppresses its interaction with KLHL18 and down-regulates its KLHL18-mediated degradation. Phosphorylated more under light conditions than dark conditions. Dephosphorylated by calcineurin. As to expression, localized in photoreceptor synapses in the outer plexiform layer of the retina.

Its subcellular location is the cytoplasm. It is found in the cytoskeleton. The protein localises to the microtubule organizing center. The protein resides in the centrosome. It localises to the spindle. Its subcellular location is the spindle pole. Involved in synaptic functions in photoreceptor cells, the signal transduction in immune cells as a Src family kinase activator, endosome recycling, the uptake of bacteria and endocytosis, protein trafficking in sensory neurons and as lipid-binding chaperone with specificity for a diverse subset of myristoylated proteins. Specifically binds the myristoyl moiety of a subset of N-terminally myristoylated proteins and is required for their localization. Binds myristoylated GNAT1 and is required for G-protein localization and trafficking in sensory neurons. Probably plays a role in trafficking proteins in photoreceptor cells. Plays important roles in mediating Src family kinase signals for the completion of cytokinesis via RAB11A. The sequence is that of Protein unc-119 homolog A (Unc119) from Mus musculus (Mouse).